The chain runs to 677 residues: Methionine--tRNA ligase (677 aa).

The 'HIGH' region motif lies at 15–25; the sequence is PYANGSIHLGH. Residues Cys146, Cys149, Cys159, and Cys162 each contribute to the Zn(2+) site. The short motif at 333–337 is the 'KMSKS' region element; sequence KMSKS. Lys336 lines the ATP pocket. Residues 575–677 enclose the tRNA-binding domain; it reads DFAKIDLRVA…DGAKPGQQVK (103 aa).

This sequence belongs to the class-I aminoacyl-tRNA synthetase family. MetG type 1 subfamily. In terms of assembly, homodimer. Zn(2+) serves as cofactor.

The protein resides in the cytoplasm. It carries out the reaction tRNA(Met) + L-methionine + ATP = L-methionyl-tRNA(Met) + AMP + diphosphate. In terms of biological role, is required not only for elongation of protein synthesis but also for the initiation of all mRNA translation through initiator tRNA(fMet) aminoacylation. The protein is Methionine--tRNA ligase of Salmonella choleraesuis (strain SC-B67).